Reading from the N-terminus, the 196-residue chain is Imidazoleglycerol-phosphate dehydratase (196 aa).

Belongs to the imidazoleglycerol-phosphate dehydratase family.

The protein resides in the cytoplasm. The enzyme catalyses D-erythro-1-(imidazol-4-yl)glycerol 3-phosphate = 3-(imidazol-4-yl)-2-oxopropyl phosphate + H2O. It participates in amino-acid biosynthesis; L-histidine biosynthesis; L-histidine from 5-phospho-alpha-D-ribose 1-diphosphate: step 6/9. The polypeptide is Imidazoleglycerol-phosphate dehydratase (Clostridium botulinum (strain ATCC 19397 / Type A)).